The sequence spans 342 residues: Renalase (342 aa).

An N-terminal signal peptide occupies residues 1–17 (MAQVLIVGAGMTGSLCA). Residues Thr-12, Arg-42, and 61 to 62 (QY) each bind FAD.

The protein belongs to the renalase family. It depends on FAD as a cofactor. In terms of tissue distribution, secreted into the blood by the kidney. Highly expressed in the kidney, expressed at lower level in heart, skeletal muscle and small intestine. Its plasma concentration is markedly reduced in patients with end-stage renal disease, as compared with healthy subjects.

It is found in the secreted. The catalysed reaction is 1,2-dihydro-beta-NAD + O2 + H(+) = H2O2 + NAD(+). It carries out the reaction 1,2-dihydro-beta-NADP + O2 + H(+) = H2O2 + NADP(+). It catalyses the reaction 1,6-dihydro-beta-NADP + O2 + H(+) = H2O2 + NADP(+). The enzyme catalyses 1,6-dihydro-beta-NAD + O2 + H(+) = H2O2 + NAD(+). Its function is as follows. Catalyzes the oxidation of the less abundant 1,2-dihydro-beta-NAD(P) and 1,6-dihydro-beta-NAD(P) to form beta-NAD(P)(+). The enzyme hormone is secreted by the kidney, and circulates in blood and modulates cardiac function and systemic blood pressure. Lowers blood pressure in vivo by decreasing cardiac contractility and heart rate and preventing a compensatory increase in peripheral vascular tone, suggesting a causal link to the increased plasma catecholamine and heightened cardiovascular risk. High concentrations of catecholamines activate plasma renalase and promotes its secretion and synthesis. The sequence is that of Renalase (RNLS) from Homo sapiens (Human).